Consider the following 53-residue polypeptide: Virion membrane protein OPG141 (53 aa).

The next 2 helical transmembrane spans lie at 5–25 (YEPLLLLVITCCVLLFNFTIS) and 30–50 (IDIIFAVQTIVFIWFIFHFVY).

Belongs to the orthopoxvirus OPG141 protein family. Post-translationally, not phosphorylated.

The protein resides in the virion membrane. Functionally, protein probably involved in counteracting host defense, since it enhances virulence in vivo. The sequence is that of Virion membrane protein OPG141 (OPG141) from Cynomys gunnisoni (Gunnison's prairie dog).